A 624-amino-acid chain; its full sequence is uncharacterized protein (624 aa).

Residues 108-138 are disordered; the sequence is PTAWSGMESDSTASERSLPQRTDTTSVSSQY. Phosphoserine is present on Ser112. Polar residues predominate over residues 115-138; the sequence is ESDSTASERSLPQRTDTTSVSSQY. Ser205 carries the post-translational modification Phosphoserine. Disordered stretches follow at residues 217–236 and 305–329; these read LMES…PGTR and KREC…PVSE.

This is an uncharacterized protein from Rattus norvegicus (Rat).